The following is a 684-amino-acid chain: Probable pectin methyltransferase QUA2 (684 aa).

The segment at 1–35 (MSMPLQRGISGVRVSDSSDDLRDSQMKDKTERARS) is disordered. At 1-86 (MSMPLQRGIS…RHRLMLLFLK (86 aa)) the chain is on the cytoplasmic side. Positions 19–35 (DDLRDSQMKDKTERARS) are enriched in basic and acidic residues. Residues 87–107 (ISLVLIVVIALAGSFWWTISI) form a helical; Signal-anchor for type II membrane protein membrane-spanning segment. The Lumenal segment spans residues 108–684 (STSSRGHVYH…QKPFTKRQSI (577 aa)). N-linked (GlcNAc...) asparagine glycans are attached at residues Asn-161 and Asn-476.

Belongs to the methyltransferase superfamily. In terms of tissue distribution, ubiquitous.

The protein localises to the golgi apparatus membrane. The protein operates within glycan metabolism; pectin biosynthesis. In terms of biological role, may be involved in the synthesis of homogalacturonan. Required for normal cell adhesion and plant development. The polypeptide is Probable pectin methyltransferase QUA2 (QUA2) (Arabidopsis thaliana (Mouse-ear cress)).